We begin with the raw amino-acid sequence, 383 residues long: Chitinase-3-like protein 1 (383 aa).

A signal peptide spans 1–21; it reads MGLRVAQTGFVVLVLLQSCAA. A GH18 domain is found at 22-383; that stretch reads YKLICYYTSW…NAIKDVLAGV (362 aa). Cys26 and Cys51 form a disulfide bridge. Residue Asn60 is glycosylated (N-linked (GlcNAc...) asparagine). Residues 70–71, 97–100, Tyr141, 204–207, and Lys263 each bind chitin; these read EW, GGWN, and LTYD. Cys300 and Cys364 are oxidised to a cystine. Positions 324–338 are important for AKT1 activation and IL8 production; sequence QWVAYDDQESVKNKA. Position 352 (Trp352) interacts with chitin.

The protein belongs to the glycosyl hydrolase 18 family. As to quaternary structure, monomer. As to expression, detected in mammary gland.

Its subcellular location is the secreted. The protein localises to the extracellular space. It is found in the cytoplasm. It localises to the perinuclear region. The protein resides in the endoplasmic reticulum. In terms of biological role, carbohydrate-binding lectin with a preference for chitin. Has no chitinase activity. May play a role in tissue remodeling and in the capacity of cells to respond to and cope with changes in their environment. Plays a role in T-helper cell type 2 (Th2) inflammatory response and IL-13-induced inflammation, regulating allergen sensitization, inflammatory cell apoptosis, dendritic cell accumulation and M2 macrophage differentiation. Facilitates invasion of pathogenic enteric bacteria into colonic mucosa and lymphoid organs. Mediates activation of AKT1 signaling pathway and subsequent IL8 production in colonic epithelial cells. Regulates antibacterial responses in lung by contributing to macrophage bacterial killing, controlling bacterial dissemination and augmenting host tolerance. Also regulates hyperoxia-induced injury, inflammation and epithelial apoptosis in lung. The chain is Chitinase-3-like protein 1 (CHI3L1) from Bubalus bubalis (Domestic water buffalo).